The chain runs to 292 residues: Probable starch degradation products transport system permease protein AmyD (292 aa).

6 consecutive transmembrane segments (helical) span residues 15–35 (WLFI…PFII), 77–97 (FAVA…MLVT), 110–130 (FYLP…FIFV), 156–176 (FWGL…VIYI), 205–225 (VFPL…SNSF), and 260–280 (MAVG…ISVI). The 211-residue stretch at 71 to 281 (IIFTAKFAVA…LIIAVISVIQ (211 aa)) folds into the ABC transmembrane type-1 domain.

It belongs to the binding-protein-dependent transport system permease family. MalFG subfamily.

It localises to the cell membrane. Functionally, probably part of a binding-protein-dependent transport system starch degradation products. Probably responsible for the translocation of the substrate across the membrane. The sequence is that of Probable starch degradation products transport system permease protein AmyD (amyD) from Thermoanaerobacterium thermosulfurigenes (Clostridium thermosulfurogenes).